The primary structure comprises 1074 residues: Semaphorin-5A (1074 aa).

The signal sequence occupies residues 1 to 22 (MKGACILAWLFSSLGVWRLARP). Residues 35-484 (HPVVSYKEIG…LQEHVVKIPL (450 aa)) form the Sema domain. Disulfide bonds link cysteine 104-cysteine 114 and cysteine 131-cysteine 140. 4 N-linked (GlcNAc...) asparagine glycosylation sites follow: asparagine 147, asparagine 168, asparagine 227, and asparagine 277. Intrachain disulfides connect cysteine 254–cysteine 357 and cysteine 278–cysteine 320. Asparagine 323 and asparagine 367 each carry an N-linked (GlcNAc...) asparagine glycan. Positions 486-533 (RCHFHQTRGACIGAQDPYCGWDAVMKKCTSLEESLSMTQWDQSVPTCP) constitute a PSI domain. Residues asparagine 536 and asparagine 591 are each glycosylated (N-linked (GlcNAc...) asparagine). TSP type-1 domains follow at residues 540–593 (DGSF…TNCS), 595–651 (NGGW…LLCP), and 653–702 (HVFW…NACP). Intrachain disulfides connect cysteine 607-cysteine 644, cysteine 611-cysteine 650, cysteine 622-cysteine 634, cysteine 665-cysteine 696, cysteine 669-cysteine 701, and cysteine 680-cysteine 686. Asparagine 717 carries an N-linked (GlcNAc...) asparagine glycan. TSP type-1 domains lie at 784–839 (NGAW…LPCP), 841–896 (DGVW…QTCP), and 897–944 (ENWS…VFDS). Intrachain disulfides connect cysteine 796-cysteine 833, cysteine 800-cysteine 838, cysteine 811-cysteine 823, cysteine 853-cysteine 890, cysteine 857-cysteine 895, and cysteine 868-cysteine 880. N-linked (GlcNAc...) asparagine glycans are attached at residues asparagine 898 and asparagine 933. Residues 969–989 (FHMMAVGLSSSILGCLLTLLV) form a helical membrane-spanning segment. Asparagine 1015 carries N-linked (GlcNAc...) asparagine glycosylation.

Binds PLXNB3.

Its subcellular location is the membrane. Bifunctional axonal guidance cue regulated by sulfated proteoglycans; attractive effects result from interactions with heparan sulfate proteoglycans (HSPGs), while the inhibitory effects depend on interactions with chondroitin sulfate proteoglycans (CSPGs). Ligand for receptor PLXNB3. In glioma cells, SEMA5A stimulation of PLXNB3 results in the disassembly of F-actin stress fibers, disruption of focal adhesions and cellular collapse as well as inhibition of cell migration and invasion through ARHGDIA-mediated inactivation of RAC1. May promote angiogenesis by increasing endothelial cell proliferation and migration and inhibiting apoptosis. In Rattus norvegicus (Rat), this protein is Semaphorin-5A (Sema5a).